The primary structure comprises 434 residues: MPITKIHARQIYDSRGNPTVEVDLFTEKGVFRAAVPSGASTGVHEALELRDGDKAVHLGKGVLKAVSNINEKIAPALIAKGFDVTAQKDIDDFMMALDGSENKGNLGANAILGVSLAVAKAGAVHKGLPLYKYIAELAGTGKVVLPVPAFNVINGGSHAGNKLAMQEFMILPVGASSFAEAMRMGSEVYHHLKAEIKKRYGLDATAVGDEGGFAPNIQDNKEGLDLLNTAIDKAGYTGKISIGMDVAASEFFKDGKYDLDFKNPASDSSKWLSGEQLTELYQSFIKEYPVVSIEDAFDQDDWDNWGKFHGATSIQLVGDDLTVTNPKRIQTAIDKKSCNCLLLKVNQIGSVTESIEAAKLSRANGWGVMVSHRSGETEDTFIADLVVGLATGQIKTGAPCRSERLAKYNQLLRIEEELGADAVYAGHNFRNPQV.

Histidine 158 and glutamate 167 together coordinate substrate. Residue glutamate 210 is the Proton donor of the active site. The Mg(2+) site is built by aspartate 245, glutamate 294, and aspartate 319. Glutamate 294 and aspartate 319 together coordinate substrate. The Proton acceptor role is filled by lysine 344. Residues 371 to 374 (SHRS) and lysine 395 each bind substrate.

This sequence belongs to the enolase family. As to quaternary structure, homodimer. Mg(2+) is required as a cofactor.

The protein localises to the cytoplasm. It carries out the reaction (2R)-2-phosphoglycerate = phosphoenolpyruvate + H2O. The protein operates within carbohydrate degradation; glycolysis; pyruvate from D-glyceraldehyde 3-phosphate: step 4/5. In Caenorhabditis elegans, this protein is Enolase.